Reading from the N-terminus, the 155-residue chain is Ribosomal RNA large subunit methyltransferase H (155 aa).

S-adenosyl-L-methionine contacts are provided by residues glycine 104 and 123-128 (FGNITL).

This sequence belongs to the RNA methyltransferase RlmH family. As to quaternary structure, homodimer.

It localises to the cytoplasm. It catalyses the reaction pseudouridine(1915) in 23S rRNA + S-adenosyl-L-methionine = N(3)-methylpseudouridine(1915) in 23S rRNA + S-adenosyl-L-homocysteine + H(+). Functionally, specifically methylates the pseudouridine at position 1915 (m3Psi1915) in 23S rRNA. The sequence is that of Ribosomal RNA large subunit methyltransferase H from Mesoplasma florum (strain ATCC 33453 / NBRC 100688 / NCTC 11704 / L1) (Acholeplasma florum).